A 382-amino-acid chain; its full sequence is Queuine tRNA-ribosyltransferase (382 aa).

The active-site Proton acceptor is aspartate 96. Substrate-binding positions include 96-100 (DSGGF), aspartate 151, glutamine 194, and glycine 221. Positions 252–258 (GVGAPDS) are RNA binding. Aspartate 271 serves as the catalytic Nucleophile. The tract at residues 276–280 (TRIAR) is RNA binding; important for wobble base 34 recognition. Residues cysteine 309, cysteine 311, cysteine 314, and histidine 340 each coordinate Zn(2+).

The protein belongs to the queuine tRNA-ribosyltransferase family. As to quaternary structure, homodimer. Within each dimer, one monomer is responsible for RNA recognition and catalysis, while the other monomer binds to the replacement base PreQ1. Zn(2+) is required as a cofactor.

The enzyme catalyses 7-aminomethyl-7-carbaguanine + guanosine(34) in tRNA = 7-aminomethyl-7-carbaguanosine(34) in tRNA + guanine. It functions in the pathway tRNA modification; tRNA-queuosine biosynthesis. In terms of biological role, catalyzes the base-exchange of a guanine (G) residue with the queuine precursor 7-aminomethyl-7-deazaguanine (PreQ1) at position 34 (anticodon wobble position) in tRNAs with GU(N) anticodons (tRNA-Asp, -Asn, -His and -Tyr). Catalysis occurs through a double-displacement mechanism. The nucleophile active site attacks the C1' of nucleotide 34 to detach the guanine base from the RNA, forming a covalent enzyme-RNA intermediate. The proton acceptor active site deprotonates the incoming PreQ1, allowing a nucleophilic attack on the C1' of the ribose to form the product. After dissociation, two additional enzymatic reactions on the tRNA convert PreQ1 to queuine (Q), resulting in the hypermodified nucleoside queuosine (7-(((4,5-cis-dihydroxy-2-cyclopenten-1-yl)amino)methyl)-7-deazaguanosine). This Lactococcus lactis subsp. lactis (strain IL1403) (Streptococcus lactis) protein is Queuine tRNA-ribosyltransferase.